The following is a 234-amino-acid chain: DNA repair and recombination protein RadB (234 aa).

The protein belongs to the eukaryotic RecA-like protein family. RadB subfamily.

Its function is as follows. Involved in DNA repair and in homologous recombination. May regulate the cleavage reactions of the branch-structured DNA. Has a very weak ATPase activity that is not stimulated by DNA. Binds DNA but does not promote DNA strands exchange. This chain is DNA repair and recombination protein RadB, found in Methanobrevibacter smithii (strain ATCC 35061 / DSM 861 / OCM 144 / PS).